A 580-amino-acid chain; its full sequence is Proline--tRNA ligase (580 aa).

It belongs to the class-II aminoacyl-tRNA synthetase family. ProS type 1 subfamily. Homodimer.

Its subcellular location is the cytoplasm. The enzyme catalyses tRNA(Pro) + L-proline + ATP = L-prolyl-tRNA(Pro) + AMP + diphosphate. In terms of biological role, catalyzes the attachment of proline to tRNA(Pro) in a two-step reaction: proline is first activated by ATP to form Pro-AMP and then transferred to the acceptor end of tRNA(Pro). As ProRS can inadvertently accommodate and process non-cognate amino acids such as alanine and cysteine, to avoid such errors it has two additional distinct editing activities against alanine. One activity is designated as 'pretransfer' editing and involves the tRNA(Pro)-independent hydrolysis of activated Ala-AMP. The other activity is designated 'posttransfer' editing and involves deacylation of mischarged Ala-tRNA(Pro). The misacylated Cys-tRNA(Pro) is not edited by ProRS. In Albidiferax ferrireducens (strain ATCC BAA-621 / DSM 15236 / T118) (Rhodoferax ferrireducens), this protein is Proline--tRNA ligase.